Consider the following 843-residue polypeptide: OTU domain-containing protein 7B (843 aa).

Positions 50–88 (GNLPPSFSEGSGGSRTPEKGFSDREPTRPPRPILQRQDD) are disordered. A compositionally biased stretch (basic and acidic residues) spans 65-77 (TPEKGFSDREPTR). Serine 100 carries the phosphoserine modification. Residues 152-401 (ERDLIEQSML…AVDPGKGWEW (250 aa)) are TRAF-binding. A catalytic region spans residues 167-440 (AGRLNWWVSV…VKWIPLSSDA (274 aa)). Residues 183-365 (LLPLATTGDG…QAHFSALVSM (183 aa)) enclose the OTU domain. Residues 187–193 (ATTGDGN) form a regulatory loop region. Residue aspartate 191 is part of the active site. Cysteine 194 acts as the Nucleophile in catalysis. Histidine 358 (proton acceptor) is an active-site residue. Disordered stretches follow at residues 442–587 (APLA…GGSK) and 652–711 (IMNG…CQEP). Composition is skewed to basic and acidic residues over residues 456-471 (DEPR…DKES) and 488-500 (SKRD…KRAD). Residues serine 464, serine 467, and serine 471 each carry the phosphoserine modification. A Nuclear localization signal motif is present at residues 483 to 498 (RRKEKSKRDREKDKKR). Over residues 531–543 (KPGGVGTGLGGSS) the composition is skewed to gly residues. Residues 665–675 (KKPEPDAREEQ) show a composition bias toward basic and acidic residues. Residue threonine 729 is modified to Phosphothreonine. The interval 732–792 (RQCPPGRPYP…PEPDGWAGGL (61 aa)) is disordered. The segment at 796-831 (PPTQTKCKQPNCSFYGHPETNNFCSCCYREELRRRE) adopts an A20-type zinc-finger fold. Zn(2+) contacts are provided by cysteine 802, cysteine 807, cysteine 819, and cysteine 822.

The protein belongs to the peptidase C64 family. As to quaternary structure, interacts with ZAP70 in activated T cells, but not in resting T cells. Interacts with TRAF3. Interacts with TRAF6. Interacts with PARK7, leading to inhibit deubiquitinase activity. Interacts with EGFR, ITCH and NEDD4. In terms of processing, phosphorylated by EGFR. Widely expressed. Abundant in kidney, heart and fetal liver. Expressed differentially among B-cells at distinct developmental stages. Higher expression seen in primary immature B-cells as compared to the mature cells.

It is found in the cytoplasm. It localises to the nucleus. The catalysed reaction is Thiol-dependent hydrolysis of ester, thioester, amide, peptide and isopeptide bonds formed by the C-terminal Gly of ubiquitin (a 76-residue protein attached to proteins as an intracellular targeting signal).. Its activity is regulated as follows. Deubiquitinase activity is inhibited following interaction with PARK7. Functionally, negative regulator of the non-canonical NF-kappa-B pathway that acts by mediating deubiquitination of TRAF3, an inhibitor of the NF-kappa-B pathway, thereby acting as a negative regulator of B-cell responses. In response to non-canonical NF-kappa-B stimuli, deubiquitinates 'Lys-48'-linked polyubiquitin chains of TRAF3, preventing TRAF3 proteolysis and over-activation of non-canonical NF-kappa-B. Negatively regulates mucosal immunity against infections. Deubiquitinates ZAP70, and thereby regulates T cell receptor (TCR) signaling that leads to the activation of NF-kappa-B. Plays a role in T cell homeostasis and is required for normal T cell responses, including production of IFNG and IL2. Mediates deubiquitination of EGFR. Has deubiquitinating activity toward 'Lys-11', 'Lys-48' and 'Lys-63'-linked polyubiquitin chains. Has a much higher catalytic rate with 'Lys-11'-linked polyubiquitin chains (in vitro); however the physiological significance of these data are unsure. Hydrolyzes both linear and branched forms of polyubiquitin. Acts as a regulator of mTORC1 and mTORC2 assembly by mediating 'Lys-63'-linked deubiquitination of MLST8, thereby promoting assembly of the mTORC2 complex, while inibiting formation of the mTORC1 complex. The chain is OTU domain-containing protein 7B (OTUD7B) from Homo sapiens (Human).